We begin with the raw amino-acid sequence, 806 residues long: Transitional endoplasmic reticulum ATPase (806 aa).

At Ala2 the chain carries N-acetylalanine. Phosphoserine is present on residues Ser3 and Ser7. Lys8 is covalently cross-linked (Glycyl lysine isopeptide (Lys-Gly) (interchain with G-Cter in SUMO2)). A Phosphoserine modification is found at Ser13. Lys18 is covalently cross-linked (Glycyl lysine isopeptide (Lys-Gly) (interchain with G-Cter in SUMO2)). Ser37 is subject to Phosphoserine. 247-253 lines the ATP pocket; the sequence is PGTGKTL. Lys315 carries the post-translational modification N6,N6,N6-trimethyllysine; by VCPKMT. ATP is bound by residues Asn348 and His384. Thr436 carries the phosphothreonine modification. At Ser462 the chain carries Phosphoserine. N6-acetyllysine occurs at positions 502 and 505. 521–526 lines the ATP pocket; it reads GCGKTL. Lys668 is subject to N6-acetyllysine; alternate. Residue Lys668 is modified to N6-succinyllysine; alternate. Position 702 is a phosphoserine (Ser702). A disordered region spans residues 708-727; the sequence is RRERERQTNPSAMEVEEDDP. Lys754 is modified (N6-acetyllysine). The tract at residues 768 to 806 is disordered; it reads FGSFRFPSGNQGGAGPSQGSGGGTGGNVYTEDNDDDLYG. Phosphoserine occurs at positions 770, 775, and 787. A compositionally biased stretch (gly residues) spans 777–793; sequence NQGGAGPSQGSGGGTGG. Positions 797 to 806 are interaction with UBXN6; that stretch reads TEDNDDDLYG. Residues 802-806 carry the PIM motif motif; the sequence is DDLYG. Tyr805 is subject to Phosphotyrosine.

Belongs to the AAA ATPase family. Homohexamer. Forms a ring-shaped particle of 12.5 nm diameter, that displays 6-fold radial symmetry. Interacts with NSFL1C-like protein p37; the complex has membrane fusion activity and is required for Golgi and endoplasmic reticulum biogenesis. Interacts with RHBDD1 (via C-terminal domain). Interacts with SELENOS and SYVN1, as well as with DERL1 (via SHP-box motif), DERL2 and DERL3; which probably transfer misfolded proteins from the ER to VCP. Interacts with SVIP and DERL1. Component of a complex required to couple retrotranslocation, ubiquitination and deglycosylation composed of NGLY1, SAKS1, AMFR, VCP and RAD23B. Part of a complex composed of STUB1/CHIP, VCP/p97, CHRNA3, and UBXN2A that modulates the ubiquitination and endoplasmic reticulum-associated degradation (ERAD) of CHRNA3. Within the complex UBXN2A acts as a scaffold protein required for the interaction of CHRNA3 with VCP/p97, this interaction also inhibits CHRNA3 ubiquitination by STUB1/CHIP and subsequently ERAD. Interacts with UBXN2A (via UBX domain); the interaction is required for the interaction of CHRNA3 in the STUB1-VCP-UBXN2A complex. Directly interacts with UBXN4 and RNF19A. Interacts with CASR. Interacts with UBE4B and YOD1. Interacts with clathrin. Interacts with RNF103. Interacts with TRIM13 and TRIM21. Component of a VCP/p97-AMFR/gp78 complex that participates in the final step of the endoplasmic reticulum-associated degradation (ERAD) of HMGCR. Interacts directly with AMFR/gp78 (via its VIM). Interacts with SPRTN; leading to recruitment to stalled replication forks. Part of a ternary complex containing STX5A, NSFL1C and VCP. NSFL1C forms a homotrimer that binds to one end of a VCP homohexamer. The complex binds to membranes enriched in phosphatidylethanolamine-containing lipids and promotes Golgi membrane fusion. Binds to a heterodimer of NPLOC4 and UFD1, binding to this heterodimer inhibits Golgi-membrane fusion. Interaction with VCIP135 leads to dissociation of the complex via ATP hydrolysis by VCP. Part of a ternary complex containing NPLOC4, UFD1 and VCP. Interacts with WASHC5. Interacts with UBOX5. Interacts (via N-terminus) with UBXN7, UBXN8, and probably several other UBX domain-containing proteins (via UBX domains); the interactions are mutually exclusive with VIM-dependent interactions such as those with AMFR and SELENOS. Forms a complex with UBQLN1 and UBXN4. Interacts (via the PIM motif) with RNF31 (via the PUB domain). Interacts with RIGI and RNF125; interaction takes place when RIGI is ubiquitinated via 'Lys-63'-linked ubiquitin on its CARD domains, leading to recruit RNF125 and promote ubiquitination and degradation of RIGI. Interacts with BAG6. Interacts with UBXN10. Interacts with UBXN6; the interaction with UBXN6 is direct and competitive with UFD1. Forms a ternary complex with CAV1 and UBXN6. Interacts with PLAA, UBXN6 and YOD1; may form a complex involved in macroautophagy. Interacts with ANKZF1. Interacts with ubiquitin-binding protein FAF1. Interacts with ZFAND2B (via VIM motif); the interaction is direct. Interacts with ZFAND1 (via its ubiquitin-like region); this interaction occurs in an arsenite-dependent manner. Interacts with CCDC47. Interacts with LMBR1L and UBAC2. Interacts with ATXN3. Interacts with TEX264; bridging VCP to covalent DNA-protein cross-links (DPCs). Post-translationally, phosphorylated by tyrosine kinases in response to T-cell antigen receptor activation. Phosphorylated in mitotic cells. ISGylated. In terms of processing, methylation at Lys-315 catalyzed by VCPKMT is increased in the presence of ASPSCR1. Lys-315 methylation may decrease ATPase activity.

The protein localises to the cytoplasm. It localises to the cytosol. It is found in the endoplasmic reticulum. Its subcellular location is the nucleus. The protein resides in the stress granule. It carries out the reaction ATP + H2O = ADP + phosphate + H(+). Functionally, necessary for the fragmentation of Golgi stacks during mitosis and for their reassembly after mitosis. Involved in the formation of the transitional endoplasmic reticulum (tER). The transfer of membranes from the endoplasmic reticulum to the Golgi apparatus occurs via 50-70 nm transition vesicles which derive from part-rough, part-smooth transitional elements of the endoplasmic reticulum (tER). Vesicle budding from the tER is an ATP-dependent process. The ternary complex containing UFD1, VCP and NPLOC4 binds ubiquitinated proteins and is necessary for the export of misfolded proteins from the ER to the cytoplasm, where they are degraded by the proteasome. The NPLOC4-UFD1-VCP complex regulates spindle disassembly at the end of mitosis and is necessary for the formation of a closed nuclear envelope. Regulates E3 ubiquitin-protein ligase activity of RNF19A. Component of the VCP/p97-AMFR/gp78 complex that participates in the final step of the sterol-mediated ubiquitination and endoplasmic reticulum-associated degradation (ERAD) of HMGCR. Mediates the endoplasmic reticulum-associated degradation of CHRNA3 in cortical neurons as part of the STUB1-VCP-UBXN2A complex. Involved in endoplasmic reticulum stress-induced pre-emptive quality control, a mechanism that selectively attenuates the translocation of newly synthesized proteins into the endoplasmic reticulum and reroutes them to the cytosol for proteasomal degradation. Involved in clearance process by mediating G3BP1 extraction from stress granules. Also involved in DNA damage response: recruited to double-strand breaks (DSBs) sites in a RNF8- and RNF168-dependent manner and promotes the recruitment of TP53BP1 at DNA damage sites. Recruited to stalled replication forks by SPRTN: may act by mediating extraction of DNA polymerase eta (POLH) to prevent excessive translesion DNA synthesis and limit the incidence of mutations induced by DNA damage. Together with SPRTN metalloprotease, involved in the repair of covalent DNA-protein cross-links (DPCs) during DNA synthesis. Involved in interstrand cross-link repair in response to replication stress by mediating unloading of the ubiquitinated CMG helicase complex. Mediates extraction of PARP1 trapped to chromatin: recognizes and binds ubiquitinated PARP1 and promotes its removal. Required for cytoplasmic retrotranslocation of stressed/damaged mitochondrial outer-membrane proteins and their subsequent proteasomal degradation. Essential for the maturation of ubiquitin-containing autophagosomes and the clearance of ubiquitinated protein by autophagy. Acts as a negative regulator of type I interferon production by interacting with RIGI: interaction takes place when RIGI is ubiquitinated via 'Lys-63'-linked ubiquitin on its CARD domains, leading to recruit RNF125 and promote ubiquitination and degradation of RIGI. May play a role in the ubiquitin-dependent sorting of membrane proteins to lysosomes where they undergo degradation. May more particularly play a role in caveolins sorting in cells. By controlling the steady-state expression of the IGF1R receptor, indirectly regulates the insulin-like growth factor receptor signaling pathway. The sequence is that of Transitional endoplasmic reticulum ATPase (Vcp) from Rattus norvegicus (Rat).